We begin with the raw amino-acid sequence, 291 residues long: HTH-type transcriptional regulator CitR (291 aa).

Residues 1–58 (MDFKWLHTFVTAAKYENFRKTAETLFLSQPTVTVHIKQLEKEISCKLFERKGRQIQLT) form the HTH lysR-type domain. Residues 18-37 (FRKTAETLFLSQPTVTVHIK) constitute a DNA-binding region (H-T-H motif).

It belongs to the LysR transcriptional regulatory family.

It is found in the cytoplasm. Negative regulatory protein for the citA gene for citrate synthase I. The protein is HTH-type transcriptional regulator CitR (citR) of Bacillus subtilis (strain 168).